A 506-amino-acid chain; its full sequence is ATP synthase subunit alpha, chloroplastic (506 aa).

170 to 177 (GDRQTGKT) is an ATP binding site.

Belongs to the ATPase alpha/beta chains family. F-type ATPases have 2 components, CF(1) - the catalytic core - and CF(0) - the membrane proton channel. CF(1) has five subunits: alpha(3), beta(3), gamma(1), delta(1), epsilon(1). CF(0) has four main subunits: a, b, b' and c.

It is found in the plastid. The protein resides in the chloroplast thylakoid membrane. It carries out the reaction ATP + H2O + 4 H(+)(in) = ADP + phosphate + 5 H(+)(out). Its function is as follows. Produces ATP from ADP in the presence of a proton gradient across the membrane. The alpha chain is a regulatory subunit. The protein is ATP synthase subunit alpha, chloroplastic of Chlorokybus atmophyticus (Soil alga).